We begin with the raw amino-acid sequence, 189 residues long: Ribosome maturation factor RimM (189 aa).

Positions Asp-110 to Phe-189 constitute a PRC barrel domain.

Belongs to the RimM family. Binds ribosomal protein uS19.

It localises to the cytoplasm. Its function is as follows. An accessory protein needed during the final step in the assembly of 30S ribosomal subunit, possibly for assembly of the head region. Essential for efficient processing of 16S rRNA. May be needed both before and after RbfA during the maturation of 16S rRNA. It has affinity for free ribosomal 30S subunits but not for 70S ribosomes. The chain is Ribosome maturation factor RimM from Blochmanniella pennsylvanica (strain BPEN).